The primary structure comprises 643 residues: MKLRKAWLLVLLLALTQLLAAASAEDAHEDASDSENPIEDDDDEEEDEEDEDDLEVKEENGVWVLNDENFDNFVADKDTVLLEFYAPWCGHCKQFAPEYEKIASTLKDNDPPIAVAKIDATSASMLASKFDVSGYPTIKILKKGQAVDYDGSRTQEEIVAKVREVSQPDWTPPPEVTLTLTKENFDDVVNNADIILVEFYAPWCGHCKKLAPEYEKAAKELSKRSPPIPLAKVDATEQTDLAKRFDVSGYPTLKIFRKGRPFDYNGPREKYGIVDYMVEQSGPPSKEILTLKQVQEFLKDGDDVVILGVFQGVGDPGYLQYQDAANTLREDYKFHHTFSTEIAKFLKVSLGKLVLMQPEKFQSKYEPRMHVMDVQGSTEASAIKDYVVKHALPLVGHRKTSNDAKRYSKRPLVVVYYSVDFSFDYRTATQFWRNKVLEVAKDFPEYTFAIADEEDYATEVKDLGLSESGEDVNAAILDESGKKFAMEPEEFDSDALQEFVMAFKKGKLKPVIKSQPVPKNNKGPVRVVVGKTFDAIVMDPKKDVLIEFYAPWCGHCKQLEPVYTSLGKKYKGQKDLVIAKMDATANDITNDRYKVEGFPTIYFAPSGDKKNPIKFEGGNRDLEHLSKFIDEHATKRSRTKEEL.

A signal peptide spans 1 to 20 (MKLRKAWLLVLLLALTQLLA). Thioredoxin domains are found at residues 21 to 167 (AASA…EVSQ) and 167 to 299 (QPDW…EFLK). The interval 24–58 (AEDAHEDASDSENPIEDDDDEEEDEEDEDDLEVKE) is disordered. The segment covering 32 to 56 (SDSENPIEDDDDEEEDEEDEDDLEV) has biased composition (acidic residues). The short motif at 89–92 (CGHC) is the CXXC element. 2 disulfide bridges follow: C89–C92 and C204–C207. N6-acetyllysine is present on K364. The Thioredoxin 3 domain occupies 503–634 (FKKGKLKPVI…LSKFIDEHAT (132 aa)). Positions 553–556 (CGHC) match the CXXC motif. A disulfide bridge connects residues C553 and C556. A Prevents secretion from ER motif is present at residues 640–643 (KEEL).

It belongs to the protein disulfide isomerase family. As to quaternary structure, part of a large chaperone multiprotein complex comprising DNAJB11, HSP90B1, HSPA5, HYOU, PDIA2, PDIA4, PDIA6, PPIB, SDF2L1, UGGT1 and very small amounts of ERP29, but not, or at very low levels, CALR nor CANX. Component of a complex containing at least CRELD2, MANF, MATN3 and PDIA4. O-glycosylated.

It localises to the endoplasmic reticulum lumen. Its subcellular location is the melanosome. The enzyme catalyses Catalyzes the rearrangement of -S-S- bonds in proteins.. The protein is Protein disulfide-isomerase A4 (Pdia4) of Rattus norvegicus (Rat).